Here is a 95-residue protein sequence, read N- to C-terminus: Glutamyl-tRNA(Gln) amidotransferase subunit C (95 aa).

The protein belongs to the GatC family. Heterotrimer of A, B and C subunits.

It catalyses the reaction L-glutamyl-tRNA(Gln) + L-glutamine + ATP + H2O = L-glutaminyl-tRNA(Gln) + L-glutamate + ADP + phosphate + H(+). The catalysed reaction is L-aspartyl-tRNA(Asn) + L-glutamine + ATP + H2O = L-asparaginyl-tRNA(Asn) + L-glutamate + ADP + phosphate + 2 H(+). Its function is as follows. Allows the formation of correctly charged Asn-tRNA(Asn) or Gln-tRNA(Gln) through the transamidation of misacylated Asp-tRNA(Asn) or Glu-tRNA(Gln) in organisms which lack either or both of asparaginyl-tRNA or glutaminyl-tRNA synthetases. The reaction takes place in the presence of glutamine and ATP through an activated phospho-Asp-tRNA(Asn) or phospho-Glu-tRNA(Gln). The chain is Glutamyl-tRNA(Gln) amidotransferase subunit C from Caulobacter vibrioides (strain ATCC 19089 / CIP 103742 / CB 15) (Caulobacter crescentus).